Consider the following 322-residue polypeptide: Cytochrome c biogenesis protein CcsA (322 aa).

A run of 8 helical transmembrane segments spans residues 19–39 (NAIF…LIIV), 43–63 (LICN…FFYL), 72–92 (FFPL…LLFI), 104–124 (VIGA…SLSL), 150–170 (MMLS…YLVL), 230–250 (TIGI…VWAN), 264–281 (TWAL…HARL), and 291–311 (AFLG…VNFL).

It belongs to the CcmF/CycK/Ccl1/NrfE/CcsA family. In terms of assembly, may interact with Ccs1.

The protein localises to the plastid. It localises to the chloroplast thylakoid membrane. Its function is as follows. Required during biogenesis of c-type cytochromes (cytochrome c6 and cytochrome f) at the step of heme attachment. In Heterosigma akashiwo (strain NIES-293 / 8280G21-1), this protein is Cytochrome c biogenesis protein CcsA.